The chain runs to 335 residues: V-set and immunoglobulin domain-containing protein 1 (335 aa).

The first 21 residues, 1-21 (MFPTMLKIFPILATLAGHVHG), serve as a signal peptide directing secretion. The Ig-like V-type domain maps to 22 to 136 (VVVTVPEKTV…SQKSVIVNVL (115 aa)). Over 22–233 (VVVTVPEKTV…DLTSMHSDGN (212 aa)) the chain is Extracellular. Intrachain disulfides connect Cys-43–Cys-115 and Cys-160–Cys-210. An Ig-like C2-type domain is found at 139 to 226 (PSKPFCKIEG…GNSTCELDLT (88 aa)). The helical transmembrane segment at 234–254 (IVAGALIGAILAAVIICAIVW) threads the bilayer. Over 255 to 335 (VLTKKAKKKK…QKEETAGSSF (81 aa)) the chain is Cytoplasmic. The disordered stretch occupies residues 266 to 335 (SSNEMQVMAQ…QKEETAGSSF (70 aa)). The span at 268-306 (NEMQVMAQKQSNAEYAQVPNEENTPATAVLPSNATNEQP) shows a compositional bias: polar residues. The segment covering 319 to 335 (NDEKHEVQKEETAGSSF) has biased composition (basic and acidic residues).

As to expression, expressed in thymocytes.

It is found in the membrane. This chain is V-set and immunoglobulin domain-containing protein 1 (VSIG1), found in Gallus gallus (Chicken).